Consider the following 551-residue polypeptide: Tetrachloroethene reductive dehalogenase (551 aa).

Residues 1 to 39 (MGEINRRNFLKVSILGAAAAAVASASAVKGMVSPLVADA) constitute a signal peptide (tat-type signal). Residues 411–440 (PRKFGVREFCRLCKKCADACPAQAISHEKD) form the 4Fe-4S ferredoxin-type 1 domain. Residues Cys-420, Cys-423, Cys-426, Cys-430, Cys-467, Cys-478, Cys-481, and Cys-485 each contribute to the [4Fe-4S] cluster site. One can recognise a 4Fe-4S ferredoxin-type 2 domain in the interval 478 to 496 (CSNCVAVCSWNKVETWNHD).

The protein belongs to the PceA family. It depends on [4Fe-4S] cluster as a cofactor. The cofactor is corrinoid. In terms of processing, predicted to be exported by the Tat system. The position of the signal peptide cleavage has not been experimentally proven.

It localises to the cell membrane. The catalysed reaction is trichloroethene + chloride + A + H(+) = tetrachloroethene + AH2. The enzyme catalyses trichloroethene + AH2 = (Z)-1,2-dichloroethene + chloride + A + H(+). Functionally, catalyzes the reductive dechlorination of tetrachloroethene (PCE) to trichloroethene (TCE) and of trichloroethene to cis-1,2-dichloroethene (DCE). The protein is Tetrachloroethene reductive dehalogenase of Desulfitobacterium hafniense (Desulfitobacterium frappieri).